Here is a 322-residue protein sequence, read N- to C-terminus: Phospho-N-acetylmuramoyl-pentapeptide-transferase (322 aa).

10 helical membrane-spanning segments follow: residues 6 to 26 (ASCI…PLLI), 54 to 74 (TMGG…VTAW), 82 to 102 (VWIL…DDGI), 122 to 142 (IIIA…FGLY), 145 to 165 (FAGV…WLVG), 176 to 196 (LDGL…YIAF), 200 to 220 (NFAI…FFIF), 227 to 247 (IFMG…VSIM), 255 to 275 (LLVG…VISF), and 302 to 322 (VDIV…AIWG).

This sequence belongs to the glycosyltransferase 4 family. MraY subfamily. Requires Mg(2+) as cofactor.

It is found in the cell membrane. It catalyses the reaction UDP-N-acetyl-alpha-D-muramoyl-L-alanyl-gamma-D-glutamyl-L-lysyl-D-alanyl-D-alanine + di-trans,octa-cis-undecaprenyl phosphate = Mur2Ac(oyl-L-Ala-gamma-D-Glu-L-Lys-D-Ala-D-Ala)-di-trans,octa-cis-undecaprenyl diphosphate + UMP. Its pathway is cell wall biogenesis; peptidoglycan biosynthesis. Catalyzes the initial step of the lipid cycle reactions in the biosynthesis of the cell wall peptidoglycan: transfers peptidoglycan precursor phospho-MurNAc-pentapeptide from UDP-MurNAc-pentapeptide onto the lipid carrier undecaprenyl phosphate, yielding undecaprenyl-pyrophosphoryl-MurNAc-pentapeptide, known as lipid I. The chain is Phospho-N-acetylmuramoyl-pentapeptide-transferase from Lactobacillus helveticus (strain DPC 4571).